The primary structure comprises 270 residues: Probable aquaporin NIP-type (270 aa).

A run of 2 helical transmembrane segments spans residues 45 to 65 (LIAE…SVAV) and 72 to 92 (VTFP…VYTV). The short motif at 101–103 (NPA) is the NPA 1 element. 3 helical membrane-spanning segments follow: residues 121–141 (LYII…ALLF), 160–180 (SLAI…GVAT), and 188–208 (VAGI…GPIS). Positions 213–215 (NPA) match the NPA 2 motif. Residues 231-251 (WVYVVGPIIGTLAGAFVYNLI) traverse the membrane as a helical segment.

The protein belongs to the MIP/aquaporin (TC 1.A.8) family. NIP (TC 1.A.8.12) subfamily. In terms of tissue distribution, pollen specific.

It is found in the membrane. Functionally, aquaporins facilitate the transport of water and small neutral solutes across cell membranes. This Nicotiana alata (Winged tobacco) protein is Probable aquaporin NIP-type.